We begin with the raw amino-acid sequence, 399 residues long: Acetate kinase (399 aa).

Residue asparagine 9 participates in Mg(2+) binding. Lysine 16 is a binding site for ATP. Position 90 (arginine 90) interacts with substrate. Catalysis depends on aspartate 147, which acts as the Proton donor/acceptor. Residues 207–211 (HLGNG), 281–283 (DFR), and 333–337 (GVGEN) each bind ATP. Glutamate 387 contacts Mg(2+).

It belongs to the acetokinase family. Homodimer. Requires Mg(2+) as cofactor. Mn(2+) serves as cofactor.

It localises to the cytoplasm. It catalyses the reaction acetate + ATP = acetyl phosphate + ADP. The protein operates within metabolic intermediate biosynthesis; acetyl-CoA biosynthesis; acetyl-CoA from acetate: step 1/2. Functionally, catalyzes the formation of acetyl phosphate from acetate and ATP. Can also catalyze the reverse reaction. In Mycobacterium sp. (strain KMS), this protein is Acetate kinase.